The primary structure comprises 585 residues: Aspartate--tRNA ligase (585 aa).

Residue Glu-173 coordinates L-aspartate. The interval 197–200 (QTLK) is aspartate. Residue Arg-219 coordinates L-aspartate. ATP contacts are provided by residues 219–221 (RDE) and Gln-228. His-446 contacts L-aspartate. Glu-480 is an ATP binding site. Residue Arg-487 participates in L-aspartate binding. 532-535 (GLDR) contributes to the ATP binding site.

Belongs to the class-II aminoacyl-tRNA synthetase family. Type 1 subfamily. Homodimer.

It is found in the cytoplasm. The enzyme catalyses tRNA(Asp) + L-aspartate + ATP = L-aspartyl-tRNA(Asp) + AMP + diphosphate. Catalyzes the attachment of L-aspartate to tRNA(Asp) in a two-step reaction: L-aspartate is first activated by ATP to form Asp-AMP and then transferred to the acceptor end of tRNA(Asp). The protein is Aspartate--tRNA ligase of Parabacteroides distasonis (strain ATCC 8503 / DSM 20701 / CIP 104284 / JCM 5825 / NCTC 11152).